Consider the following 197-residue polypeptide: Orotate phosphoribosyltransferase (197 aa).

5-phospho-alpha-D-ribose 1-diphosphate is bound by residues Arg-87, Lys-91, His-93, and 112–120; that span reads DDVATTGGS. Orotate is bound by residues Thr-116 and Arg-144.

It belongs to the purine/pyrimidine phosphoribosyltransferase family. PyrE subfamily. Homodimer. Mg(2+) serves as cofactor.

It carries out the reaction orotidine 5'-phosphate + diphosphate = orotate + 5-phospho-alpha-D-ribose 1-diphosphate. It functions in the pathway pyrimidine metabolism; UMP biosynthesis via de novo pathway; UMP from orotate: step 1/2. In terms of biological role, catalyzes the transfer of a ribosyl phosphate group from 5-phosphoribose 1-diphosphate to orotate, leading to the formation of orotidine monophosphate (OMP). The polypeptide is Orotate phosphoribosyltransferase (Sulfolobus acidocaldarius (strain ATCC 33909 / DSM 639 / JCM 8929 / NBRC 15157 / NCIMB 11770)).